Consider the following 681-residue polypeptide: Phenylalanine--tRNA ligase beta subunit (681 aa).

A B5 domain is found at 288–363; that stretch reads PARETVLLRP…RIHGYDQIPE (76 aa). Mg(2+) contacts are provided by D341, D347, E350, and E351. In terms of domain architecture, FDX-ACB spans 586–681; the sequence is SSFPSIQRDL…EKQLEAVLLR (96 aa).

It belongs to the phenylalanyl-tRNA synthetase beta subunit family. Type 1 subfamily. Tetramer of two alpha and two beta subunits. Requires Mg(2+) as cofactor.

It localises to the cytoplasm. The catalysed reaction is tRNA(Phe) + L-phenylalanine + ATP = L-phenylalanyl-tRNA(Phe) + AMP + diphosphate + H(+). The protein is Phenylalanine--tRNA ligase beta subunit of Rhodopirellula baltica (strain DSM 10527 / NCIMB 13988 / SH1).